Reading from the N-terminus, the 371-residue chain is Aminomethyltransferase (371 aa).

Belongs to the GcvT family. The glycine cleavage system is composed of four proteins: P, T, L and H.

The catalysed reaction is N(6)-[(R)-S(8)-aminomethyldihydrolipoyl]-L-lysyl-[protein] + (6S)-5,6,7,8-tetrahydrofolate = N(6)-[(R)-dihydrolipoyl]-L-lysyl-[protein] + (6R)-5,10-methylene-5,6,7,8-tetrahydrofolate + NH4(+). In terms of biological role, the glycine cleavage system catalyzes the degradation of glycine. In Cutibacterium acnes (strain DSM 16379 / KPA171202) (Propionibacterium acnes), this protein is Aminomethyltransferase.